A 274-amino-acid polypeptide reads, in one-letter code: uncharacterized protein (274 aa).

Positions 1-21 (MRKLTLLPLLLIITGLLTVQA) are cleaved as a signal peptide. The helical transmembrane segment at 249 to 266 (TSAFVILTASALIFIYLF) threads the bilayer.

Its subcellular location is the membrane. This is an uncharacterized protein from Archaeoglobus fulgidus (strain ATCC 49558 / DSM 4304 / JCM 9628 / NBRC 100126 / VC-16).